We begin with the raw amino-acid sequence, 199 residues long: Thioredoxin reductase-like selenoprotein T (199 aa).

The N-terminal stretch at methionine 1–serine 24 is a signal peptide. The cysteinyl-selenocysteine (Cys-Sec) cross-link spans cysteine 50–selenocysteine 53. Residue selenocysteine 53 is a non-standard amino acid, selenocysteine. A helical membrane pass occupies residues valine 95–glycine 115.

It belongs to the SelWTH family. Selenoprotein T subfamily. Post-translationally, may contain a selenide-sulfide bond between Cys-50 and Sec-53. This bond is speculated to serve as redox-active pair.

The protein localises to the endoplasmic reticulum membrane. It catalyses the reaction [thioredoxin]-dithiol + NADP(+) = [thioredoxin]-disulfide + NADPH + H(+). Selenoprotein with thioredoxin reductase-like oxidoreductase activity. The polypeptide is Thioredoxin reductase-like selenoprotein T (Gallus gallus (Chicken)).